Reading from the N-terminus, the 262-residue chain is Snake venom serine protease (262 aa).

The signal sequence occupies residues 1 to 18 (MVLIRVLANLLILQLSYA). Positions 19-24 (QKSSEL) are excised as a propeptide. One can recognise a Peptidase S1 domain in the interval 25–253 (VIGGDECNIN…YTEWIQSIIA (229 aa)). Cystine bridges form between Cys-31–Cys-167, Cys-50–Cys-66, Cys-102–Cys-260, Cys-146–Cys-214, Cys-178–Cys-193, and Cys-204–Cys-229. Active-site charge relay system residues include His-65 and Asp-114. Asn-125 and Asn-158 each carry an N-linked (GlcNAc...) asparagine glycan. The Charge relay system role is filled by Ser-208.

It belongs to the peptidase S1 family. Snake venom subfamily. Monomer. In terms of tissue distribution, expressed by the venom gland.

The protein localises to the secreted. Functionally, snake venom serine protease that may act in the hemostasis system of the prey. This chain is Snake venom serine protease, found in Crotalus durissus durissus (Central American rattlesnake).